A 282-amino-acid chain; its full sequence is Malonyl-[acyl-carrier protein] O-methyltransferase 1 (282 aa).

It belongs to the methyltransferase superfamily.

The catalysed reaction is malonyl-[ACP] + S-adenosyl-L-methionine = malonyl-[ACP] methyl ester + S-adenosyl-L-homocysteine. The protein operates within cofactor biosynthesis; biotin biosynthesis. Functionally, converts the free carboxyl group of a malonyl-thioester to its methyl ester by transfer of a methyl group from S-adenosyl-L-methionine (SAM). It allows to synthesize pimeloyl-ACP via the fatty acid synthetic pathway. This chain is Malonyl-[acyl-carrier protein] O-methyltransferase 1, found in Coxiella burnetii (strain RSA 493 / Nine Mile phase I).